We begin with the raw amino-acid sequence, 113 residues long: MAGLKDVVTREYTINLHKRLHGVSFKKRAPRAVKEIKKFAKLHMGTDDVRLAPELNQAIWKRGVKGVEYRLRLRISRKRNEEEDAKNPLFSYVEPVLVASAKGLQTVVVEEDA.

Belongs to the eukaryotic ribosomal protein eL31 family. In terms of assembly, component of the large ribosomal subunit (LSU). Mature yeast ribosomes consist of a small (40S) and a large (60S) subunit. The 40S small subunit contains 1 molecule of ribosomal RNA (18S rRNA) and 33 different proteins (encoded by 57 genes). The large 60S subunit contains 3 rRNA molecules (25S, 5.8S and 5S rRNA) and 46 different proteins (encoded by 81 genes).

The protein localises to the cytoplasm. Component of the ribosome, a large ribonucleoprotein complex responsible for the synthesis of proteins in the cell. The small ribosomal subunit (SSU) binds messenger RNAs (mRNAs) and translates the encoded message by selecting cognate aminoacyl-transfer RNA (tRNA) molecules. The large subunit (LSU) contains the ribosomal catalytic site termed the peptidyl transferase center (PTC), which catalyzes the formation of peptide bonds, thereby polymerizing the amino acids delivered by tRNAs into a polypeptide chain. The nascent polypeptides leave the ribosome through a tunnel in the LSU and interact with protein factors that function in enzymatic processing, targeting, and the membrane insertion of nascent chains at the exit of the ribosomal tunnel. The polypeptide is Large ribosomal subunit protein eL31A (Saccharomyces cerevisiae (strain ATCC 204508 / S288c) (Baker's yeast)).